The sequence spans 173 residues: Alpha-crystallin A chain (173 aa).

Met-1 is modified (N-acetylmethionine). Positions 1-63 (MDVTIQHPWF…RTVLDSGISE (63 aa)) are required for complex formation with BFSP1 and BFSP2. Position 6 is a deamidated glutamine; partial (Gln-6). Position 45 is a phosphoserine (Ser-45). Gln-50 is modified (deamidated glutamine; partial). The 111-residue stretch at 52-162 (LFRTVLDSGI…GHSERAIPVS (111 aa)) folds into the sHSP domain. The residue at position 99 (Lys-99) is an N6-acetyllysine. Position 100 (His-100) interacts with Zn(2+). Asn-101 is modified (deamidated asparagine; partial). Residues Glu-102 and His-107 each coordinate Zn(2+). Ser-122 carries the post-translational modification Phosphoserine. A Deamidated asparagine; partial modification is found at Asn-123. Cys-131 and Cys-142 are oxidised to a cystine. The segment at 146–173 (VQSSMDDGHSERAIPVSREEKPSSVPSS) is disordered. Residue Gln-147 is modified to Deamidated glutamine; partial. Basic and acidic residues predominate over residues 151-167 (DDGHSERAIPVSREEKP). Zn(2+) is bound at residue His-154. O-linked (GlcNAc) serine glycosylation occurs at Ser-162.

Belongs to the small heat shock protein (HSP20) family. As to quaternary structure, heteromer composed of three CRYAA and one CRYAB subunits. Inter-subunit bridging via zinc ions enhances stability, which is crucial as there is no protein turn over in the lens. Can also form homodimers and homotetramers (dimers of dimers) which serve as the building blocks of homooligomers. Within homooligomers, the zinc-binding motif is created from residues of 3 different molecules. His-100 and Glu-102 from one molecule are ligands of the zinc ion, and His-107 and His-154 residues from additional molecules complete the site with tetrahedral coordination geometry. Part of a complex required for lens intermediate filament formation composed of BFSP1, BFSP2 and CRYAA. In terms of processing, undergoes age-dependent proteolytical cleavage at the C-terminus.

It localises to the cytoplasm. Its subcellular location is the nucleus. In terms of biological role, contributes to the transparency and refractive index of the lens. In its oxidized form (absence of intramolecular disulfide bond), acts as a chaperone, preventing aggregation of various proteins under a wide range of stress conditions. Required for the correct formation of lens intermediate filaments as part of a complex composed of BFSP1, BFSP2 and CRYAA. In Orycteropus afer (Aardvark), this protein is Alpha-crystallin A chain (CRYAA).